The chain runs to 418 residues: Queuine tRNA-ribosyltransferase accessory subunit 2 (418 aa).

Residues Cys-325, Cys-327, Cys-330, and His-356 each contribute to the Zn(2+) site.

This sequence belongs to the queuine tRNA-ribosyltransferase family. QTRT2 subfamily. As to quaternary structure, heterodimer of a catalytic subunit and an accessory subunit. Requires Zn(2+) as cofactor.

The protein resides in the cytoplasm. Non-catalytic subunit of the queuine tRNA-ribosyltransferase (TGT) that catalyzes the base-exchange of a guanine (G) residue with queuine (Q) at position 34 (anticodon wobble position) in tRNAs with GU(N) anticodons (tRNA-Asp, -Asn, -His and -Tyr), resulting in the hypermodified nucleoside queuosine (7-(((4,5-cis-dihydroxy-2-cyclopenten-1-yl)amino)methyl)-7-deazaguanosine). The chain is Queuine tRNA-ribosyltransferase accessory subunit 2 from Drosophila sechellia (Fruit fly).